We begin with the raw amino-acid sequence, 95 residues long: Large ribosomal subunit protein bL27 (95 aa).

A propeptide spanning residues Met1–Phe10 is cleaved from the precursor.

This sequence belongs to the bacterial ribosomal protein bL27 family. In terms of processing, the N-terminus is cleaved by ribosomal processing cysteine protease Prp.

The sequence is that of Large ribosomal subunit protein bL27 from Mesoplasma florum (strain ATCC 33453 / NBRC 100688 / NCTC 11704 / L1) (Acholeplasma florum).